We begin with the raw amino-acid sequence, 176 residues long: MAAAPAVCASQGSPPGAPSAPAAAPAPAAGLGRCRMALLLAVALDVAGMAALLTGVFAQLQVRGRDFGDLLIYSGALLVFLSLLGWILWYTGNIEISRQELERDYGLRPSALARLARKLSRRWSAPAAAGQRPAPGSRRARRAARAPPPPAAGSRRVRLQLATLEAGPGAAGAGSE.

The segment at 1-22 is disordered; the sequence is MAAAPAVCASQGSPPGAPSAPA. The Cytoplasmic segment spans residues 1–36; sequence MAAAPAVCASQGSPPGAPSAPAAAPAPAAGLGRCRM. Over residues 9–22 the composition is skewed to low complexity; that stretch reads ASQGSPPGAPSAPA. A helical membrane pass occupies residues 37 to 57; that stretch reads ALLLAVALDVAGMAALLTGVF. At 58–69 the chain is on the extracellular side; the sequence is AQLQVRGRDFGD. A helical membrane pass occupies residues 70-90; that stretch reads LLIYSGALLVFLSLLGWILWY. Residues 91–176 are Cytoplasmic-facing; sequence TGNIEISRQE…GPGAAGAGSE (86 aa). Residues 124-137 show a composition bias toward low complexity; the sequence is SAPAAAGQRPAPGS. The segment at 124 to 157 is disordered; that stretch reads SAPAAAGQRPAPGSRRARRAARAPPPPAAGSRRV. Serine 175 carries the phosphoserine modification.

Its subcellular location is the membrane. In Homo sapiens (Human), this protein is Transmembrane protein 238 (TMEM238).